The chain runs to 328 residues: Protein chibby homolog 2 (328 aa).

The disordered stretch occupies residues 180-231; the sequence is NKGASSVQKDTENTTAAGEGSLGPTCQEEHDAKEESTTPTQNDTKIAPSTED. A compositionally biased stretch (polar residues) spans 182-195; it reads GASSVQKDTENTTA. Basic and acidic residues predominate over residues 206-215; the sequence is QEEHDAKEES. Residues 259–307 are a coiled coil; it reads RESLHALQDESKFFQEEYKKLKLQLNNVKNTVSDITTQMEMLEKELIAI.

It belongs to the chibby family. SPERT subfamily.

This chain is Protein chibby homolog 2 (CBY2), found in Gallus gallus (Chicken).